Consider the following 203-residue polypeptide: MGMRFLKNEKGFTGLEAAIVLIAFVTVAAVFSYVLLGAGFFATQKGQETVHTGVKQATSSMELVGSIVAKGSTTNDNITEVTFTLQLAAGGQPIDLNKTVITVLVPKDGDFVELSYESNSSSLDKASEYYVNWIYSLQGSSPDNYLEEFEKAEVTVYLDSTGAGLDINPNDDFIIEVKPPIGATYPIELKAPPSIDSMMVLLK.

The propeptide occupies 1-11 (MGMRFLKNEKG).

The protein belongs to the archaeal flagellin family.

The protein localises to the archaeal flagellum. In terms of biological role, flagellin is the subunit protein which polymerizes to form the filaments of archaeal flagella. This chain is Probable flagellin 1 (flaB1), found in Archaeoglobus fulgidus (strain ATCC 49558 / DSM 4304 / JCM 9628 / NBRC 100126 / VC-16).